A 403-amino-acid polypeptide reads, in one-letter code: Dihydroorotase (403 aa).

Positions 48 and 50 each coordinate Zn(2+). Substrate is bound by residues 50–52 (HLR) and N82. E140, H172, H211, and D277 together coordinate Zn(2+). D277 is a catalytic residue. H281 is a substrate binding site.

It belongs to the metallo-dependent hydrolases superfamily. DHOase family. Class I DHOase subfamily. Requires Zn(2+) as cofactor.

The catalysed reaction is (S)-dihydroorotate + H2O = N-carbamoyl-L-aspartate + H(+). The protein operates within pyrimidine metabolism; UMP biosynthesis via de novo pathway; (S)-dihydroorotate from bicarbonate: step 3/3. Catalyzes the reversible cyclization of carbamoyl aspartate to dihydroorotate. This Archaeoglobus fulgidus (strain ATCC 49558 / DSM 4304 / JCM 9628 / NBRC 100126 / VC-16) protein is Dihydroorotase.